The chain runs to 473 residues: Chromosomal replication initiator protein DnaA (473 aa).

A domain I, interacts with DnaA modulators region spans residues Met-1–Val-87. A domain II region spans residues Val-87–Thr-132. The interval Arg-133–Ala-349 is domain III, AAA+ region. ATP is bound by residues Gly-177, Gly-179, Lys-180, and Thr-181. A domain IV, binds dsDNA region spans residues Ser-350 to Arg-473.

The protein belongs to the DnaA family. As to quaternary structure, oligomerizes as a right-handed, spiral filament on DNA at oriC.

Its subcellular location is the cytoplasm. Functionally, plays an essential role in the initiation and regulation of chromosomal replication. ATP-DnaA binds to the origin of replication (oriC) to initiate formation of the DNA replication initiation complex once per cell cycle. Binds the DnaA box (a 9 base pair repeat at the origin) and separates the double-stranded (ds)DNA. Forms a right-handed helical filament on oriC DNA; dsDNA binds to the exterior of the filament while single-stranded (ss)DNA is stabiized in the filament's interior. The ATP-DnaA-oriC complex binds and stabilizes one strand of the AT-rich DNA unwinding element (DUE), permitting loading of DNA polymerase. After initiation quickly degrades to an ADP-DnaA complex that is not apt for DNA replication. Binds acidic phospholipids. The protein is Chromosomal replication initiator protein DnaA of Leifsonia xyli subsp. xyli (strain CTCB07).